The primary structure comprises 220 residues: Metalloproteinase inhibitor 2 (220 aa).

A signal peptide spans 1-26; the sequence is MGAAARSLRLALGLLLLATLPRPADA. Cys-27 lines the Zn(2+) pocket. Involved in metalloproteinase-binding regions lie at residues 27–30 and 95–96; these read CSCS and SA. 6 disulfides stabilise this stretch: Cys-27/Cys-98, Cys-29/Cys-127, Cys-39/Cys-152, Cys-154/Cys-201, Cys-159/Cys-164, and Cys-172/Cys-193. The NTR domain maps to 27–152; sequence CSCSPVHPQQ…SLNHRYQMGC (126 aa).

Belongs to the protease inhibitor I35 (TIMP) family. Interacts (via the C-terminal) with MMP2 (via the C-terminal PEX domain); the interaction inhibits the MMP2 activity. In terms of processing, the activity of TIMP2 is dependent on the presence of disulfide bonds.

It localises to the secreted. Functionally, complexes with metalloproteinases (such as collagenases) and irreversibly inactivates them by binding to their catalytic zinc cofactor. This Canis lupus familiaris (Dog) protein is Metalloproteinase inhibitor 2 (TIMP2).